Reading from the N-terminus, the 430-residue chain is 3-phosphoshikimate 1-carboxyvinyltransferase (430 aa).

K20, S21, and R25 together coordinate 3-phosphoshikimate. K20 is a binding site for phosphoenolpyruvate. Phosphoenolpyruvate contacts are provided by G90 and R118. Positions 163, 164, 165, 191, 311, and 338 each coordinate 3-phosphoshikimate. Q165 provides a ligand contact to phosphoenolpyruvate. D311 serves as the catalytic Proton acceptor. Residues R342 and R383 each coordinate phosphoenolpyruvate.

It belongs to the EPSP synthase family. Monomer.

The protein localises to the cytoplasm. The enzyme catalyses 3-phosphoshikimate + phosphoenolpyruvate = 5-O-(1-carboxyvinyl)-3-phosphoshikimate + phosphate. It participates in metabolic intermediate biosynthesis; chorismate biosynthesis. Functionally, catalyzes the transfer of the enolpyruvyl moiety of phosphoenolpyruvate (PEP) to the 5-hydroxyl of shikimate-3-phosphate (S3P) to produce enolpyruvyl shikimate-3-phosphate and inorganic phosphate. The sequence is that of 3-phosphoshikimate 1-carboxyvinyltransferase from Methanosarcina mazei (strain ATCC BAA-159 / DSM 3647 / Goe1 / Go1 / JCM 11833 / OCM 88) (Methanosarcina frisia).